A 468-amino-acid chain; its full sequence is ATP synthase subunit beta (468 aa).

Residue 148-155 (GGAGVGKT) coordinates ATP.

The protein belongs to the ATPase alpha/beta chains family. In terms of assembly, F-type ATPases have 2 components, CF(1) - the catalytic core - and CF(0) - the membrane proton channel. CF(1) has five subunits: alpha(3), beta(3), gamma(1), delta(1), epsilon(1). CF(0) has three main subunits: a(1), b(2) and c(9-12). The alpha and beta chains form an alternating ring which encloses part of the gamma chain. CF(1) is attached to CF(0) by a central stalk formed by the gamma and epsilon chains, while a peripheral stalk is formed by the delta and b chains.

The protein localises to the cell inner membrane. It catalyses the reaction ATP + H2O + 4 H(+)(in) = ADP + phosphate + 5 H(+)(out). Produces ATP from ADP in the presence of a proton gradient across the membrane. The catalytic sites are hosted primarily by the beta subunits. The protein is ATP synthase subunit beta of Xanthomonas campestris pv. campestris (strain B100).